Here is a 231-residue protein sequence, read N- to C-terminus: 2,3-bisphosphoglycerate-dependent phosphoglycerate mutase (231 aa).

Residues 8-15, 21-22, arginine 60, 87-90, lysine 98, 114-115, and 183-184 each bind substrate; these read RHGESEWN, TG, ERHY, RR, and GN. Residue histidine 9 is the Tele-phosphohistidine intermediate of the active site. Glutamate 87 acts as the Proton donor/acceptor in catalysis.

This sequence belongs to the phosphoglycerate mutase family. BPG-dependent PGAM subfamily.

It carries out the reaction (2R)-2-phosphoglycerate = (2R)-3-phosphoglycerate. It functions in the pathway carbohydrate degradation; glycolysis; pyruvate from D-glyceraldehyde 3-phosphate: step 3/5. Functionally, catalyzes the interconversion of 2-phosphoglycerate and 3-phosphoglycerate. The sequence is that of 2,3-bisphosphoglycerate-dependent phosphoglycerate mutase from Streptococcus equi subsp. zooepidemicus (strain H70).